We begin with the raw amino-acid sequence, 654 residues long: Myrosinase-binding protein 2 (654 aa).

4 consecutive Jacalin-type lectin domains span residues 2–151 (SEKV…HFFA), 156–291 (LKHF…HFAP), 346–489 (PNKV…YFAP), and 502–645 (AKKL…HAVP). Pro residues predominate over residues 314 to 346 (VPAPSPAPAPSPAPAPAPAPAPAPTPAPAPAPP). The interval 314 to 355 (VPAPSPAPAPSPAPAPAPAPAPAPTPAPAPAPPNKVEALGGN) is disordered.

Belongs to the jacalin lectin family. As to expression, expressed in flowers. Detected mainly in ovules and styles of immature flowers, but also in pistils, styles, stamens, petals and embryos. Not detected in leaves.

This is Myrosinase-binding protein 2 (MBP2) from Arabidopsis thaliana (Mouse-ear cress).